The sequence spans 195 residues: Peptidyl-tRNA hydrolase (195 aa).

Residue Y18 coordinates tRNA. H23 functions as the Proton acceptor in the catalytic mechanism. TRNA-binding residues include Y69, N71, and N117.

Belongs to the PTH family. Monomer.

The protein resides in the cytoplasm. It catalyses the reaction an N-acyl-L-alpha-aminoacyl-tRNA + H2O = an N-acyl-L-amino acid + a tRNA + H(+). Its function is as follows. Hydrolyzes ribosome-free peptidyl-tRNAs (with 1 or more amino acids incorporated), which drop off the ribosome during protein synthesis, or as a result of ribosome stalling. Functionally, catalyzes the release of premature peptidyl moieties from peptidyl-tRNA molecules trapped in stalled 50S ribosomal subunits, and thus maintains levels of free tRNAs and 50S ribosomes. The protein is Peptidyl-tRNA hydrolase of Nitrosomonas europaea (strain ATCC 19718 / CIP 103999 / KCTC 2705 / NBRC 14298).